The chain runs to 150 residues: Ribosome-binding factor A (150 aa).

The interval 131-150 is disordered; it reads LSHDDDEDGGADEAPRNGDE.

The protein belongs to the RbfA family. As to quaternary structure, monomer. Binds 30S ribosomal subunits, but not 50S ribosomal subunits or 70S ribosomes.

It is found in the cytoplasm. In terms of biological role, one of several proteins that assist in the late maturation steps of the functional core of the 30S ribosomal subunit. Associates with free 30S ribosomal subunits (but not with 30S subunits that are part of 70S ribosomes or polysomes). Required for efficient processing of 16S rRNA. May interact with the 5'-terminal helix region of 16S rRNA. This is Ribosome-binding factor A from Brucella melitensis biotype 2 (strain ATCC 23457).